Consider the following 475-residue polypeptide: MEIOTIC F-BOX protein MOF (475 aa).

Positions 1-58 are disordered; the sequence is MRRERDATQIPENPMEGIPQTAAAAAAAAAAEASEPPRKRARVDGGGGGAGEEEEDRL. Positions 22 to 33 are enriched in low complexity; sequence AAAAAAAAAAEA. The region spanning 55–91 is the F-box domain; it reads EDRLSDLPDCLLEDILAHLGSRQAVQTSVLSRRWRNL.

The protein belongs to the F-box protein family. FBX subfamily. Part of a SCF (SKP1-CUL1-F-box protein) E3 ubiquitin-protein ligase complex. Interacts (via F-box domain) directly with SKP1. In terms of tissue distribution, highly expressed in the stem, leaf and in the anther during meiosis. Weakly expressed in roots and lemma/palea.

The protein localises to the nucleus. Its subcellular location is the chromosome. The protein operates within protein modification; protein ubiquitination. Probable component of a SCF (SKP1-CULLIN-F-box protein) E3 ubiquitin-protein ligase complex and may function through the ubiquitin-mediated protein degradation or signaling pathway. Required for male meiotic prophase I progression. Required for telomere bouquet formation, homologous chromosome pairing and for the formation of the synaptonemal complex (SC), which stabilizes initial chromosomal axial associations and promotes crossover formation. Involved in meiotic DNA double-strand break (DSB) end-processing and repair, and is important in the recruitment of DSB repair proteins to the DSB sites. The sequence is that of MEIOTIC F-BOX protein MOF from Oryza sativa subsp. japonica (Rice).